Consider the following 557-residue polypeptide: Formate--tetrahydrofolate ligase (557 aa).

66–73 (TPAGEGKS) is an ATP binding site.

This sequence belongs to the formate--tetrahydrofolate ligase family.

The catalysed reaction is (6S)-5,6,7,8-tetrahydrofolate + formate + ATP = (6R)-10-formyltetrahydrofolate + ADP + phosphate. The protein operates within one-carbon metabolism; tetrahydrofolate interconversion. This chain is Formate--tetrahydrofolate ligase, found in Clostridium botulinum (strain Loch Maree / Type A3).